The primary structure comprises 350 residues: D-alanine--D-alanine ligase (350 aa).

The region spanning Asn133–Gly334 is the ATP-grasp domain. An ATP-binding site is contributed by Phe161–Gln216. Mg(2+) is bound by residues Asp288, Glu300, and Asn302.

Belongs to the D-alanine--D-alanine ligase family. The cofactor is Mg(2+). Requires Mn(2+) as cofactor.

It localises to the cytoplasm. It carries out the reaction 2 D-alanine + ATP = D-alanyl-D-alanine + ADP + phosphate + H(+). Its pathway is cell wall biogenesis; peptidoglycan biosynthesis. Cell wall formation. In Finegoldia magna (strain ATCC 29328 / DSM 20472 / WAL 2508) (Peptostreptococcus magnus), this protein is D-alanine--D-alanine ligase.